A 187-amino-acid polypeptide reads, in one-letter code: GTP cyclohydrolase 1 1 (187 aa).

This sequence belongs to the GTP cyclohydrolase I family. In terms of assembly, homomer.

It catalyses the reaction GTP + H2O = 7,8-dihydroneopterin 3'-triphosphate + formate + H(+). It participates in cofactor biosynthesis; 7,8-dihydroneopterin triphosphate biosynthesis; 7,8-dihydroneopterin triphosphate from GTP: step 1/1. The sequence is that of GTP cyclohydrolase 1 1 from Pseudomonas syringae pv. tomato (strain ATCC BAA-871 / DC3000).